The sequence spans 294 residues: Beta-lactamase (294 aa).

An N-terminal signal peptide occupies residues 1–30; sequence MKHSSLRRSLLLAGITLPLVSFALPAWANA. Catalysis depends on S75, which acts as the Acyl-ester intermediate. Position 239-241 (239-241) interacts with substrate; that stretch reads KTG.

This sequence belongs to the class-A beta-lactamase family.

It catalyses the reaction a beta-lactam + H2O = a substituted beta-amino acid. In Yersinia enterocolitica, this protein is Beta-lactamase (blaA).